Reading from the N-terminus, the 256-residue chain is 4-hydroxy-tetrahydrodipicolinate reductase (256 aa).

Residue Gly8 to Met13 participates in NAD(+) binding. Lys36 contributes to the NADP(+) binding site. NAD(+)-binding positions include Gly87–Thr89 and Ala111–Met114. The active-site Proton donor/acceptor is His143. His144 contributes to the (S)-2,3,4,5-tetrahydrodipicolinate binding site. Catalysis depends on Lys147, which acts as the Proton donor. Gly153–Thr154 contacts (S)-2,3,4,5-tetrahydrodipicolinate.

Belongs to the DapB family.

It is found in the cytoplasm. The enzyme catalyses (S)-2,3,4,5-tetrahydrodipicolinate + NAD(+) + H2O = (2S,4S)-4-hydroxy-2,3,4,5-tetrahydrodipicolinate + NADH + H(+). It carries out the reaction (S)-2,3,4,5-tetrahydrodipicolinate + NADP(+) + H2O = (2S,4S)-4-hydroxy-2,3,4,5-tetrahydrodipicolinate + NADPH + H(+). The protein operates within amino-acid biosynthesis; L-lysine biosynthesis via DAP pathway; (S)-tetrahydrodipicolinate from L-aspartate: step 4/4. In terms of biological role, catalyzes the conversion of 4-hydroxy-tetrahydrodipicolinate (HTPA) to tetrahydrodipicolinate. The chain is 4-hydroxy-tetrahydrodipicolinate reductase from Campylobacter concisus (strain 13826).